Consider the following 761-residue polypeptide: Protein spire homolog 1 (761 aa).

Disordered regions lie at residues 1–23 (MTDG…ARPE) and 160–183 (DCPD…AEVS). A KIND domain is found at 36–223 (LCLEEILTLY…RALYAETKEL (188 aa)). Acidic residues predominate over residues 160–180 (DCPDEGYEATEEEDEGEEENA). A coiled-coil region spans residues 218 to 246 (AETKELRTFLEKIKSAKENLRKMEGETEE). 2 consecutive WH2 domains span residues 295–313 (PYEM…LRKV) and 359–376 (LHER…LRPV). Disordered regions lie at residues 375–406 (PVSP…DIPD) and 419–539 (ANGT…KSLA). Residues 469–480 (SSSSISTSLVED) are compositionally biased toward low complexity. Residues 504–520 (PDKRIAPQRRHSIEKEA) show a composition bias toward basic and acidic residues. A spir-box region spans residues 557–577 (LTLTVEEVMHIRQVLVKAELE). 2 disordered regions span residues 630–694 (PSKP…DELE) and 728–761 (STKR…IKEV). Low complexity predominate over residues 636 to 647 (SLPISSLGPSIL). The span at 682–693 (KHGDRSSSKDEL) shows a compositional bias: basic and acidic residues. Residues 728–739 (STKRARLHRRTH) are compositionally biased toward basic residues. Residues 740–749 (SVYSSSTSSS) are compositionally biased toward low complexity.

It belongs to the spire family.

It is found in the cytoplasm. The protein localises to the cytoskeleton. Its subcellular location is the cytosol. The protein resides in the cleavage furrow. It localises to the perinuclear region. It is found in the cell membrane. The protein localises to the cytoplasmic vesicle membrane. Functionally, acts as an actin nucleation factor, remains associated with the slow-growing pointed end of the new filament. Involved in intracellular vesicle transport along actin fibers, providing a novel link between actin cytoskeleton dynamics and intracellular transport. Required for asymmetric spindle positioning and asymmetric cell division during meiosis. Required for normal formation of the cleavage furrow and for polar body extrusion during female germ cell meiosis. Also acts in the nucleus: together with FMN2, promotes assembly of nuclear actin filaments in response to DNA damage in order to facilitate movement of chromatin and repair factors after DNA damage. In addition, promotes innate immune signaling downstream of dsRNA sensing. Mechanistically, contributes to IRF3 phosphorylation and activation downstream of MAVS and upstream of TBK1. This is Protein spire homolog 1 from Danio rerio (Zebrafish).